Here is a 315-residue protein sequence, read N- to C-terminus: 4-carboxy-2-hydroxymuconate-6-semialdehyde dehydrogenase (315 aa).

Belongs to the Gfo/Idh/MocA family. Homodimer.

It catalyses the reaction 4-carboxy-2-hydroxymuconate semialdehyde hemiacetal + NADP(+) = 2-oxo-2H-pyran-4,6-dicarboxylate + NADPH + H(+). It participates in secondary metabolite metabolism; lignin degradation. Inhibited by p-chloromercuribenzoate (10 mM), HgCl2 (10 mM), or 5,5-dithiobis(2-nitrobenzoate) (100 mM). Involved in the degradation of protocatechuate (PCA) via the PCA 4,5-cleavage pathway. Catalyzes the oxidation of the hemiacetal form of 4-carboxy-2-hydroxymuconate-6-semialdehyde (CHMS) to produce 2-pyrone-4,6-dicarboxylate (PDC). LigC has 10-times-higher affinity to NADP than to NAD. The protein is 4-carboxy-2-hydroxymuconate-6-semialdehyde dehydrogenase (ligC) of Sphingobium sp. (strain NBRC 103272 / SYK-6).